The primary structure comprises 198 residues: uncharacterized protein (198 aa).

To A.aeolicus aq_1211 and aq_1583.

This is an uncharacterized protein from Aquifex aeolicus (strain VF5).